A 619-amino-acid chain; its full sequence is Zinc finger protein 131 (619 aa).

Residues 34–98 (TDITLIVDGH…TYTAKLMIQG (65 aa)) form the BTB domain. Positions 137-148 (TGKNEAKKRKIA) match the Nuclear localization signal 1 motif. Position 231 is a phosphoserine (Ser231). 3 consecutive C2H2-type zinc fingers follow at residues 261 to 283 (FHCE…MKSH), 288 to 311 (FKCE…NCYH), and 328 to 350 (HICQ…LRKH). Residues Lys289 and Lys295 each participate in a glycyl lysine isopeptide (Lys-Gly) (interchain with G-Cter in SUMO2) cross-link. The Nuclear localization signal 2 motif lies at 317–328 (VSKKQRTGKKIH). A C2H2-type 4; degenerate zinc finger spans residues 356–381 (FECSNCHERFARNSTLKCHLTACQTG). 2 C2H2-type zinc fingers span residues 392–414 (YECQ…LVIH) and 420–443 (NHCT…SDAH). Basic and acidic residues-rich tracts occupy residues 574 to 587 (QEER…AAME) and 595 to 612 (LETK…ENDR). The disordered stretch occupies residues 574 to 619 (QEEREPNHADAAMEEHEDAEGLETKPSEYSQARKTENDRTSLPVLE). Residue Lys598 forms a Glycyl lysine isopeptide (Lys-Gly) (interchain with G-Cter in SUMO) linkage.

This sequence belongs to the krueppel C2H2-type zinc-finger protein family. In terms of processing, monosumoylated at Lys-598 by CBX4 and UHRF2. Sumoylation may potentiate ZNF131 inhibition of estrogen signaling. Sumoylation does not interfere with ubiquitination. Post-translationally, ubiquitinated. As to expression, ubiquitously expressed. Predominant expression is found in the developing central nervous system with strongest signals in the forebrain, midbrain, and hindbrain areas and in the neural tube.

Its subcellular location is the nucleus. May be involved in transcriptional regulation as a repressor of ESR1/ER-alpha signaling. Plays a role during development and organogenesis as well as in the function of the adult central nervous system. In Mus musculus (Mouse), this protein is Zinc finger protein 131 (Znf131).